The primary structure comprises 295 residues: 4-hydroxy-tetrahydrodipicolinate synthase (295 aa).

Thr-46 is a binding site for pyruvate. Residue Tyr-134 is the Proton donor/acceptor of the active site. The Schiff-base intermediate with substrate role is filled by Lys-162. Ile-205 is a binding site for pyruvate.

Belongs to the DapA family. In terms of assembly, homotetramer; dimer of dimers.

It localises to the cytoplasm. The catalysed reaction is L-aspartate 4-semialdehyde + pyruvate = (2S,4S)-4-hydroxy-2,3,4,5-tetrahydrodipicolinate + H2O + H(+). It functions in the pathway amino-acid biosynthesis; L-lysine biosynthesis via DAP pathway; (S)-tetrahydrodipicolinate from L-aspartate: step 3/4. Functionally, catalyzes the condensation of (S)-aspartate-beta-semialdehyde [(S)-ASA] and pyruvate to 4-hydroxy-tetrahydrodipicolinate (HTPA). The polypeptide is 4-hydroxy-tetrahydrodipicolinate synthase (Anaeromyxobacter dehalogenans (strain 2CP-C)).